Reading from the N-terminus, the 166-residue chain is Ribosome maturation factor RimM (166 aa).

The 73-residue stretch at 94 to 166 (EGEYYHADLI…IVIEAAYADQ (73 aa)) folds into the PRC barrel domain.

The protein belongs to the RimM family. In terms of assembly, binds ribosomal protein uS19.

The protein resides in the cytoplasm. An accessory protein needed during the final step in the assembly of 30S ribosomal subunit, possibly for assembly of the head region. Essential for efficient processing of 16S rRNA. May be needed both before and after RbfA during the maturation of 16S rRNA. It has affinity for free ribosomal 30S subunits but not for 70S ribosomes. The polypeptide is Ribosome maturation factor RimM (Novosphingobium aromaticivorans (strain ATCC 700278 / DSM 12444 / CCUG 56034 / CIP 105152 / NBRC 16084 / F199)).